Consider the following 346-residue polypeptide: NADH-ubiquinone oxidoreductase chain 2 (346 aa).

A run of 11 helical transmembrane segments spans residues 3 to 23, 25 to 45, 59 to 79, 96 to 116, 122 to 142, 149 to 169, 178 to 198, 200 to 220, 237 to 257, 274 to 294, and 322 to 342; these read PLILTIILMTVFLGTMIVMAS, HWLMIWIGFEMNLLAIIPILM, YFLTQATASMLLMMAIIINLM, IIMTLALAMKLGLTPFHFWVP, ISLTSGLILLTWQKLAPMSIL, INLNILLTMAVLSILVGGWGG, IMAYSSIAHMGWMAAILVYNP, LTMLNMLIYIMMTLTMFMLFI, APLITTLILITLLSMGGLPPL, SSIILPTLMAIMALLNLYFYM, and ITLLPPLIIASSLLLPLTPML.

It belongs to the complex I subunit 2 family. Core subunit of respiratory chain NADH dehydrogenase (Complex I) which is composed of 45 different subunits. Interacts with TMEM242.

It is found in the mitochondrion inner membrane. It carries out the reaction a ubiquinone + NADH + 5 H(+)(in) = a ubiquinol + NAD(+) + 4 H(+)(out). In terms of biological role, core subunit of the mitochondrial membrane respiratory chain NADH dehydrogenase (Complex I) which catalyzes electron transfer from NADH through the respiratory chain, using ubiquinone as an electron acceptor. Essential for the catalytic activity and assembly of complex I. This Equus asinus (Donkey) protein is NADH-ubiquinone oxidoreductase chain 2.